The chain runs to 238 residues: Gas vesicle protein F (238 aa).

It belongs to the gas vesicle GvpF/GvpL family. Binds GvpA.

It is found in the gas vesicle. In terms of biological role, a minor component of the gas vesicle, may be involved in preventing GvpA aggregation during gas vesicle nucleation. Gas vesicles are hollow, gas filled proteinaceous nanostructures found in some microorganisms. It is not clear what function gas vesicles perform in soil bacteria. The chain is Gas vesicle protein F from Streptomyces sp. (strain CB03234).